Reading from the N-terminus, the 417-residue chain is Serine hydroxymethyltransferase (417 aa).

(6S)-5,6,7,8-tetrahydrofolate is bound by residues leucine 121 and 125-127; that span reads GHL. At lysine 229 the chain carries N6-(pyridoxal phosphate)lysine. A (6S)-5,6,7,8-tetrahydrofolate-binding site is contributed by 355-357; that stretch reads SPF.

The protein belongs to the SHMT family. As to quaternary structure, homodimer. The cofactor is pyridoxal 5'-phosphate.

The protein resides in the cytoplasm. The enzyme catalyses (6R)-5,10-methylene-5,6,7,8-tetrahydrofolate + glycine + H2O = (6S)-5,6,7,8-tetrahydrofolate + L-serine. The protein operates within one-carbon metabolism; tetrahydrofolate interconversion. It participates in amino-acid biosynthesis; glycine biosynthesis; glycine from L-serine: step 1/1. Functionally, catalyzes the reversible interconversion of serine and glycine with tetrahydrofolate (THF) serving as the one-carbon carrier. This reaction serves as the major source of one-carbon groups required for the biosynthesis of purines, thymidylate, methionine, and other important biomolecules. Also exhibits THF-independent aldolase activity toward beta-hydroxyamino acids, producing glycine and aldehydes, via a retro-aldol mechanism. The protein is Serine hydroxymethyltransferase of Aeromonas hydrophila subsp. hydrophila (strain ATCC 7966 / DSM 30187 / BCRC 13018 / CCUG 14551 / JCM 1027 / KCTC 2358 / NCIMB 9240 / NCTC 8049).